The primary structure comprises 275 residues: Protein FAM210A (275 aa).

The disordered stretch occupies residues 68–108; it reads SSQPADTPRKVPEEREPLTSATEVPKQSPVESDASDPDPLQ. Over residues 74-84 the composition is skewed to basic and acidic residues; sequence TPRKVPEEREP. Residues 109 to 221 enclose the DUF1279 domain; that stretch reads DKSISLVQRF…GYMSTPPPVK (113 aa). The helical transmembrane segment at 128-148 threads the bilayer; sequence VMIPVHLVTSTVWFGSFYYAA. Residues 221 to 271 are a coiled coil; the sequence is KEYLQDRMEETKDKITEKMEETKDKITEKMEETKDKITEKIQETKDKVSFK.

The protein belongs to the FAM210 family. In terms of assembly, interacts with ATAD3A.

It is found in the membrane. The protein resides in the mitochondrion. It localises to the cytoplasm. In terms of biological role, may play a role in the structure and strength of both muscle and bone. In Gallus gallus (Chicken), this protein is Protein FAM210A (FAM210A).